A 1358-amino-acid polypeptide reads, in one-letter code: Regulatory protein SIR4 (1358 aa).

The segment covering 1 to 15 (MPNDNKTPNRSSTPK) has biased composition (polar residues). 7 disordered regions span residues 1–98 (MPND…PHSN), 252–277 (SLSV…SPGI), 356–466 (HDEK…PPEI), 498–544 (VQGE…ISNG), 677–726 (ASTE…EDEQ), 752–787 (VSDS…DLDT), and 913–970 (HSQE…ENLS). The segment covering 26–39 (KIPEREEKSNEVKT) has biased composition (basic and acidic residues). Polar residues-rich tracts occupy residues 49–66 (KSKN…SPHQ) and 75–96 (HKQL…SFPH). A compositionally biased stretch (basic and acidic residues) spans 373–388 (QKMKEDADLKRMEILK). Residues 428–437 (QENNYNSTSR) show a composition bias toward polar residues. Residues 452–464 (KNGENKKIGKRPP) are compositionally biased toward basic and acidic residues. Over residues 507 to 517 (RNNTLNVTPSK) the composition is skewed to polar residues. The residue at position 692 (S692) is a Phosphoserine. The segment covering 706-720 (FPVSLSQPSKKSFAN) has biased composition (polar residues). Residues 754–766 (DSDDSSSDNDSLT) are compositionally biased toward acidic residues. The span at 777-787 (NEIKVTNDLDT) shows a compositional bias: basic and acidic residues. Polar residues predominate over residues 916 to 932 (EQNSSSAKPSQIPTVSS). A Glycyl lysine isopeptide (Lys-Gly) (interchain with G-Cter in SUMO) cross-link involves residue K1128. A coiled-coil region spans residues 1271–1347 (LSFVDIVLSK…DAKINKLMEK (77 aa)).

In terms of assembly, homodimer. Interacts with MPS3. Interacts with RIS1. Interacts with SIR1, SIR2 and SIR3. Interacts with YKU80. Interacts with UBP10. Interacts with RAP1 (via C-terminus).

It localises to the nucleus. In terms of biological role, the proteins SIR1 through SIR4 are required for transcriptional repression of the silent mating type loci, HML and HMR. The proteins SIR2 through SIR4 repress mulitple loci by modulating chromatin structure. Involves the compaction of chromatin fiber into a more condensed form. The sequence is that of Regulatory protein SIR4 (SIR4) from Saccharomyces cerevisiae (strain ATCC 204508 / S288c) (Baker's yeast).